Here is a 358-residue protein sequence, read N- to C-terminus: Probable D-xylulose reductase A (358 aa).

Cysteine 47, histidine 72, and glutamate 73 together coordinate Zn(2+). Position 182-187 (182-187 (GAGPVG)) interacts with NAD(+).

The protein belongs to the zinc-containing alcohol dehydrogenase family. Zn(2+) serves as cofactor.

The catalysed reaction is xylitol + NAD(+) = D-xylulose + NADH + H(+). The protein operates within carbohydrate degradation; L-arabinose degradation via L-arabinitol; D-xylulose 5-phosphate from L-arabinose (fungal route): step 4/5. In terms of biological role, xylitol dehydrogenase which catalyzes the conversion of xylitol to D-xylulose. Xylose is a major component of hemicelluloses such as xylan. Most fungi utilize D-xylose via three enzymatic reactions, xylose reductase (XR), xylitol dehydrogenase (XDH), and xylulokinase, to form xylulose 5-phosphate, which enters pentose phosphate pathway. The polypeptide is Probable D-xylulose reductase A (xdhA) (Neosartorya fischeri (strain ATCC 1020 / DSM 3700 / CBS 544.65 / FGSC A1164 / JCM 1740 / NRRL 181 / WB 181) (Aspergillus fischerianus)).